A 122-amino-acid polypeptide reads, in one-letter code: Large ribosomal subunit protein bL12 (122 aa).

The protein belongs to the bacterial ribosomal protein bL12 family. In terms of assembly, homodimer. Part of the ribosomal stalk of the 50S ribosomal subunit. Forms a multimeric L10(L12)X complex, where L10 forms an elongated spine to which 2 to 4 L12 dimers bind in a sequential fashion. Binds GTP-bound translation factors.

Its function is as follows. Forms part of the ribosomal stalk which helps the ribosome interact with GTP-bound translation factors. Is thus essential for accurate translation. The protein is Large ribosomal subunit protein bL12 of Mycoplasma capricolum subsp. capricolum (strain California kid / ATCC 27343 / NCTC 10154).